The sequence spans 288 residues: 11-beta-hydroxysteroid dehydrogenase 1 (288 aa).

Topologically, residues 1–4 (MKKY) are cytoplasmic. A helical; Signal-anchor for type II membrane protein transmembrane segment spans residues 5-20 (LLPVLVLCLGYYYSTN). At 21–288 (EEFRPEMLQG…SYNRDLFVSN (268 aa)) the chain is on the lumenal side. NADP(+)-binding positions include 37–63 (GASK…TARS), 88–89 (TM), and 115–117 (NHI). An N-linked (GlcNAc...) asparagine glycan is attached at N158. S166 lines the substrate pocket. Y179 functions as the Proton acceptor in the catalytic mechanism. 179–183 (YSASK) is an NADP(+) binding site. N203 is a glycosylation site (N-linked (GlcNAc...) asparagine). NADP(+) contacts are provided by residues 212–218 (GFIDTET) and 214–218 (IDTET).

Belongs to the short-chain dehydrogenases/reductases (SDR) family. As to quaternary structure, homodimer. Post-translationally, glycosylated. Liver, kidney, lung and testis. Brain. Expressed in liver (at protein level).

The protein resides in the endoplasmic reticulum membrane. It carries out the reaction an 11beta-hydroxysteroid + NADP(+) = an 11-oxosteroid + NADPH + H(+). It catalyses the reaction corticosterone + NADP(+) = 11-dehydrocorticosterone + NADPH + H(+). The enzyme catalyses a 7beta-hydroxysteroid + NADP(+) = a 7-oxosteroid + NADPH + H(+). The catalysed reaction is 7-oxocholesterol + NADPH + H(+) = 7beta-hydroxycholesterol + NADP(+). It carries out the reaction chenodeoxycholate + NADP(+) = 7-oxolithocholate + NADPH + H(+). It catalyses the reaction 7-oxolithocholate + NADPH + H(+) = ursodeoxycholate + NADP(+). The enzyme catalyses glycochenodeoxycholate + NADP(+) = 7-oxoglycolithocholate + NADPH + H(+). The catalysed reaction is taurochenodeoxycholate + NADP(+) = 7-oxotaurolithocholate + NADPH + H(+). It carries out the reaction tauroursodeoxycholate + NADP(+) = 7-oxotaurolithocholate + NADPH + H(+). It catalyses the reaction glycoursodeoxycholate + NADP(+) = 7-oxoglycolithocholate + NADPH + H(+). The enzyme catalyses 7-oxopregnenolone + NADPH + H(+) = 7beta-hydroxypregnenolone + NADP(+). The catalysed reaction is 3beta,7alpha-dihydroxyandrost-5-en-17-one + NADP(+) = 3beta-hydroxy-5-androstene-7,17-dione + NADPH + H(+). It carries out the reaction 3beta-hydroxy-5-androstene-7,17-dione + NADPH + H(+) = 3beta,7beta-dihydroxyandrost-5-en-17-one + NADP(+). It catalyses the reaction 3beta-hydroxy-5alpha-androstane-7,17-dione + NADPH + H(+) = 3beta,7beta-dihydroxy-5alpha-androstan-17-one + NADP(+). In terms of biological role, controls the reversible conversion of biologically active glucocorticoids such as 11-dehydrocorticosterone to corticosterone using NADP(H). Participates in the corticosteroid receptor-mediated anti-inflammatory response, as well as metabolic and homeostatic processes. Bidirectional in vitro, predominantly functions as a reductase in vivo, thereby increasing the concentration of active glucocorticoids. It has broad substrate specificity, besides glucocorticoids, it accepts other steroid and sterol substrates. Interconverts 7-oxo- and 7-hydroxy-neurosteroids such as 7-oxopregnenolone and 7beta-hydroxypregnenolone, 7-oxodehydroepiandrosterone (3beta-hydroxy-5-androstene-7,17-dione) and 7beta-hydroxydehydroepiandrosterone (3beta,7beta-dihydroxyandrost-5-en-17-one), among others. Catalyzes the stereo-specific conversion of the major dietary oxysterol, 7-ketocholesterol (7-oxocholesterol), into the more polar 7-beta-hydroxycholesterol metabolite. 7-oxocholesterol is one of the most important oxysterols, it participates in several events such as induction of apoptosis, accumulation in atherosclerotic lesions, lipid peroxidation, and induction of foam cell formation. Mediates the 7-oxo reduction of 7-oxolithocholate mainly to chenodeoxycholate, and to a lesser extent to ursodeoxycholate, both in its free form and when conjugated to glycine or taurine, providing a link between glucocorticoid activation and bile acid metabolism. Catalyzes the synthesis of 7-beta-25-dihydroxycholesterol from 7-oxo-25-hydroxycholesterol in vitro, which acts as a ligand for the G-protein-coupled receptor (GPCR) Epstein-Barr virus-induced gene 2 (EBI2) and may thereby regulate immune cell migration. This chain is 11-beta-hydroxysteroid dehydrogenase 1, found in Rattus norvegicus (Rat).